A 514-amino-acid chain; its full sequence is 2,3-bisphosphoglycerate-independent phosphoglycerate mutase (514 aa).

Mn(2+) contacts are provided by aspartate 14 and serine 64. Residue serine 64 is the Phosphoserine intermediate of the active site. Substrate contacts are provided by residues histidine 125, 155-156, arginine 187, arginine 193, 263-266, and lysine 336; these read RD and RADR. Mn(2+) contacts are provided by aspartate 403, histidine 407, aspartate 444, histidine 445, and histidine 463.

The protein belongs to the BPG-independent phosphoglycerate mutase family. Monomer. Mn(2+) is required as a cofactor.

The enzyme catalyses (2R)-2-phosphoglycerate = (2R)-3-phosphoglycerate. Its pathway is carbohydrate degradation; glycolysis; pyruvate from D-glyceraldehyde 3-phosphate: step 3/5. In terms of biological role, catalyzes the interconversion of 2-phosphoglycerate and 3-phosphoglycerate. The sequence is that of 2,3-bisphosphoglycerate-independent phosphoglycerate mutase from Salmonella paratyphi A (strain ATCC 9150 / SARB42).